Here is a 422-residue protein sequence, read N- to C-terminus: MLKAVILIGGPQKGTRFRPLSFEVPKPLFPVAGVPMLQHHIEACSKLPNMKEILLIGFYQPNEELNRFLSCAQQDFKISIRYLQEYAALGTGGGIYHFRDQILSGGPDAFFVMNADVCSEFPLPEMLDFQKEHGDTYSFVILGTTANRKQSLNYGCIVENEQTDEVLHYVEKPGTFVSDIINCGIYLFTPEIFQHIGSVFQKNQQEMLLEEQSNGWHRAEVIRLEQDIFTALAGQGKLYVYKTDRFWSQIKSAGSAIYASRLYLNQYHKTHPERLATNTEGGAKTRGNVYIHPTANIDPTAVLGPNVSIGTGVTIGAGVRVRESIILHGATLQDHSCVLNSIVGWESTIGKWARVEGTPSDPNPNDPYAKIDSETLFRDGKLTPSITILGCNVNIPSEVIILNSIVLPHKDLNRSFKNQIIL.

The tract at residues 2–253 (LKAVILIGGP…DRFWSQIKSA (252 aa)) is substrate-binding domain. Positions 85 and 249 each coordinate GDP-alpha-D-mannose. The interval 275 to 422 (LATNTEGGAK…NRSFKNQIIL (148 aa)) is hexapeptide repeat domain. Residues 358–386 (TPSDPNPNDPYAKIDSETLFRDGKLTPSI) are C-loop.

Belongs to the transferase hexapeptide repeat family. In terms of assembly, component of the GMPPA-GMPPB mannose-1-phosphate guanylyltransferase complex composed of 4 gmppa subunits and 8 gmppb subunits; the complex is organized into three layers, a central layer made up of 2 gmppa dimers sandwiched between two layers each made up of 2 gmppb dimers.

It participates in nucleotide-sugar biosynthesis; GDP-alpha-D-mannose biosynthesis; GDP-alpha-D-mannose from alpha-D-mannose 1-phosphate (GTP route): step 1/1. In terms of biological role, regulatory subunit of the GMPPA-GMPPB mannose-1-phosphate guanylyltransferase complex; reduces the catalytic activity of GMPPB when part of the complex. Mediates allosteric feedback inhibition of GMPPB catalytic activity upon binding GDP-alpha-D-mannose. Together with GMPPB regulates GDP-alpha-D-mannose levels. One of two paralogs (gmppaa and gmppab) that may have redundant functions. The polypeptide is Mannose-1-phosphate guanylyltransferase regulatory subunit alpha-A (gmppaa) (Danio rerio (Zebrafish)).